The sequence spans 683 residues: Long-chain-fatty-acid--CoA ligase 5 (683 aa).

Residues 12–32 (LPTPALICILTFGAAIFLWLI) traverse the membrane as a helical; Signal-anchor for type III membrane protein segment. Position 32 is a phosphoserine (isoleucine 32). Residues 33–683 (TRPQPVLPLL…IDSLYEHIQD (651 aa)) are Cytoplasmic-facing. N6-acetyllysine is present on lysine 361.

This sequence belongs to the ATP-dependent AMP-binding enzyme family. It depends on Mg(2+) as a cofactor.

Its subcellular location is the mitochondrion. The protein resides in the endoplasmic reticulum. It is found in the mitochondrion outer membrane. It localises to the endoplasmic reticulum membrane. The protein localises to the cell membrane. The enzyme catalyses a long-chain fatty acid + ATP + CoA = a long-chain fatty acyl-CoA + AMP + diphosphate. It carries out the reaction (5Z,8Z,11Z,14Z)-eicosatetraenoate + ATP + CoA = (5Z,8Z,11Z,14Z)-eicosatetraenoyl-CoA + AMP + diphosphate. It catalyses the reaction hexadecanoate + ATP + CoA = hexadecanoyl-CoA + AMP + diphosphate. The catalysed reaction is (E)-hexadec-2-enoate + ATP + CoA = (2E)-hexadecenoyl-CoA + AMP + diphosphate. The enzyme catalyses 15-hydroxy-(5Z,8Z,11Z,13E)-eicosatetraenoate + ATP + CoA = 15-hydroxy-(5Z,8Z,11Z,13E)-eicosatetraenoyl-CoA + AMP + diphosphate. It carries out the reaction 12-hydroxy-(5Z,8Z,10E,14Z)-eicosatetraenoate + ATP + CoA = 12-hydroxy-(5Z,8Z,10E,14Z)-eicosatetraenoyl-CoA + AMP + diphosphate. It catalyses the reaction 5-hydroxy-(6E,8Z,11Z,14Z)-eicosatetraenoate + ATP + CoA = 5-hydroxy-(6E,8Z,11Z,14Z)-eicosatetraenoyl-CoA + AMP + diphosphate. The catalysed reaction is 14,15-epoxy-(5Z,8Z,11Z)-eicosatrienoate + ATP + CoA = 14,15-epoxy-(5Z,8Z,11Z)-eicosatrienoyl-CoA + AMP + diphosphate. The enzyme catalyses 11,12-epoxy-(5Z,8Z,14Z)-eicosatrienoate + ATP + CoA = 11,12-epoxy-(5Z,8Z,14Z)-eicosatrienoyl-CoA + AMP + diphosphate. It carries out the reaction (9Z)-octadecenoate + ATP + CoA = (9Z)-octadecenoyl-CoA + AMP + diphosphate. In terms of biological role, catalyzes the conversion of long-chain fatty acids to their active form acyl-CoAs for both synthesis of cellular lipids, and degradation via beta-oxidation. ACSL5 may activate fatty acids from exogenous sources for the synthesis of triacylglycerol destined for intracellular storage. Utilizes a wide range of saturated fatty acids with a preference for C16-C18 unsaturated fatty acids. It was suggested that it may also stimulate fatty acid oxidation. At the villus tip of the crypt-villus axis of the small intestine may sensitize epithelial cells to apoptosis specifically triggered by the death ligand TRAIL. May have a role in the survival of glioma cells. This is Long-chain-fatty-acid--CoA ligase 5 from Homo sapiens (Human).